A 186-amino-acid chain; its full sequence is Protein GrpE (186 aa).

Residues methionine 1 to glutamate 17 show a composition bias toward basic and acidic residues. The segment at methionine 1–alanine 32 is disordered.

Belongs to the GrpE family. In terms of assembly, homodimer.

Its subcellular location is the cytoplasm. Functionally, participates actively in the response to hyperosmotic and heat shock by preventing the aggregation of stress-denatured proteins, in association with DnaK and GrpE. It is the nucleotide exchange factor for DnaK and may function as a thermosensor. Unfolded proteins bind initially to DnaJ; upon interaction with the DnaJ-bound protein, DnaK hydrolyzes its bound ATP, resulting in the formation of a stable complex. GrpE releases ADP from DnaK; ATP binding to DnaK triggers the release of the substrate protein, thus completing the reaction cycle. Several rounds of ATP-dependent interactions between DnaJ, DnaK and GrpE are required for fully efficient folding. The sequence is that of Protein GrpE from Helicobacter acinonychis (strain Sheeba).